The primary structure comprises 170 residues: Adenine phosphoribosyltransferase (170 aa).

It belongs to the purine/pyrimidine phosphoribosyltransferase family. In terms of assembly, homodimer.

Its subcellular location is the cytoplasm. The enzyme catalyses AMP + diphosphate = 5-phospho-alpha-D-ribose 1-diphosphate + adenine. Its pathway is purine metabolism; AMP biosynthesis via salvage pathway; AMP from adenine: step 1/1. Catalyzes a salvage reaction resulting in the formation of AMP, that is energically less costly than de novo synthesis. This Mycoplasmopsis pulmonis (strain UAB CTIP) (Mycoplasma pulmonis) protein is Adenine phosphoribosyltransferase.